The primary structure comprises 446 residues: Exodeoxyribonuclease 7 large subunit (446 aa).

The protein belongs to the XseA family. In terms of assembly, heterooligomer composed of large and small subunits.

Its subcellular location is the cytoplasm. It carries out the reaction Exonucleolytic cleavage in either 5'- to 3'- or 3'- to 5'-direction to yield nucleoside 5'-phosphates.. Its function is as follows. Bidirectionally degrades single-stranded DNA into large acid-insoluble oligonucleotides, which are then degraded further into small acid-soluble oligonucleotides. The sequence is that of Exodeoxyribonuclease 7 large subunit from Streptococcus pneumoniae (strain Hungary19A-6).